A 702-amino-acid polypeptide reads, in one-letter code: Polyphosphate kinase (702 aa).

Asn-55 serves as a coordination point for ATP. Residues Arg-389 and Arg-419 each contribute to the Mg(2+) site. The Phosphohistidine intermediate role is filled by His-449. Tyr-482, Arg-578, and His-606 together coordinate ATP.

This sequence belongs to the polyphosphate kinase 1 (PPK1) family. Requires Mg(2+) as cofactor. In terms of processing, an intermediate of this reaction is the autophosphorylated ppk in which a phosphate is covalently linked to a histidine residue through a N-P bond.

It carries out the reaction [phosphate](n) + ATP = [phosphate](n+1) + ADP. Its function is as follows. Catalyzes the reversible transfer of the terminal phosphate of ATP to form a long-chain polyphosphate (polyP). In Bacillus cereus (strain ATCC 14579 / DSM 31 / CCUG 7414 / JCM 2152 / NBRC 15305 / NCIMB 9373 / NCTC 2599 / NRRL B-3711), this protein is Polyphosphate kinase.